The sequence spans 94 residues: Trp operon repressor homolog (94 aa).

A DNA-binding region spans residues 58-81; sequence QREIAEKYGVSIAQITRGSNALKG.

Belongs to the TrpR family. As to quaternary structure, homodimer.

The protein resides in the cytoplasm. Functionally, this protein is an aporepressor. When complexed with L-tryptophan it binds the operator region of the trp operon and prevents the initiation of transcription. The sequence is that of Trp operon repressor homolog from Chlamydia trachomatis serovar L2 (strain ATCC VR-902B / DSM 19102 / 434/Bu).